A 341-amino-acid chain; its full sequence is Uroporphyrinogen decarboxylase (341 aa).

Substrate contacts are provided by residues 26–30 (RQAGR), D75, Y150, S205, and H318.

The protein belongs to the uroporphyrinogen decarboxylase family. In terms of assembly, homodimer.

It localises to the cytoplasm. It carries out the reaction uroporphyrinogen III + 4 H(+) = coproporphyrinogen III + 4 CO2. The protein operates within porphyrin-containing compound metabolism; protoporphyrin-IX biosynthesis; coproporphyrinogen-III from 5-aminolevulinate: step 4/4. Its function is as follows. Catalyzes the decarboxylation of four acetate groups of uroporphyrinogen-III to yield coproporphyrinogen-III. The chain is Uroporphyrinogen decarboxylase from Thermus thermophilus (strain ATCC 27634 / DSM 579 / HB8).